A 129-amino-acid polypeptide reads, in one-letter code: Phosphoribosyl-AMP cyclohydrolase (129 aa).

Asp76 lines the Mg(2+) pocket. Cys77 contacts Zn(2+). 2 residues coordinate Mg(2+): Asp78 and Asp80. Zn(2+) contacts are provided by Cys97 and Cys104.

This sequence belongs to the PRA-CH family. Homodimer. It depends on Mg(2+) as a cofactor. Zn(2+) is required as a cofactor.

Its subcellular location is the cytoplasm. It carries out the reaction 1-(5-phospho-beta-D-ribosyl)-5'-AMP + H2O = 1-(5-phospho-beta-D-ribosyl)-5-[(5-phospho-beta-D-ribosylamino)methylideneamino]imidazole-4-carboxamide. Its pathway is amino-acid biosynthesis; L-histidine biosynthesis; L-histidine from 5-phospho-alpha-D-ribose 1-diphosphate: step 3/9. Functionally, catalyzes the hydrolysis of the adenine ring of phosphoribosyl-AMP. This Albidiferax ferrireducens (strain ATCC BAA-621 / DSM 15236 / T118) (Rhodoferax ferrireducens) protein is Phosphoribosyl-AMP cyclohydrolase.